The primary structure comprises 159 residues: Ethylene-responsive transcription factor ERF069 (159 aa).

Disordered stretches follow at residues 1 to 36 (MKRI…KKLV) and 128 to 159 (DAPT…EEVV). The AP2/ERF DNA-binding region spans 74–134 (KFRGVRQRPW…IGPDAPTNFG (61 aa)). Residues 136 to 148 (PDVDSAVVKKQDS) are compositionally biased toward basic and acidic residues.

It belongs to the AP2/ERF transcription factor family. ERF subfamily.

Its subcellular location is the nucleus. Probably acts as a transcriptional activator. Binds to the GCC-box pathogenesis-related promoter element. May be involved in the regulation of gene expression by stress factors and by components of stress signal transduction pathways. The chain is Ethylene-responsive transcription factor ERF069 (ERF069) from Arabidopsis thaliana (Mouse-ear cress).